The sequence spans 325 residues: MASDSDLLDTKPAETRHPEKAHRPDQPTLRKPDWIRVRAPGSPEWAATNKIVKEHKLVTVCEEAGCPNIGECWAKKHATFMIMGDTCTRACAFCNVKTGLPRALDRNEPQRVADAVAKLGLSHVVITSVDRDDLSDGGARHFAEVIAAIRSLSPKTTIEVLTPDFLRKPGALEIVVAAKPDVFNHNLETVAGKYLGVRPGARYFHSLRLLQRVKELDPTLFTKSGIMLGLGEERQEVLQLMDDLRSADVDFMTIGQYLQPTKKHHAVARFVTPEEFNSYAEIGRAKGFLLMSSSPLTRSSHHAGEDFARLKAKRQALAPCAEAGQ.

Positions 1-31 (MASDSDLLDTKPAETRHPEKAHRPDQPTLRK) are disordered. A compositionally biased stretch (basic and acidic residues) spans 8–31 (LDTKPAETRHPEKAHRPDQPTLRK). The [4Fe-4S] cluster site is built by Cys61, Cys66, Cys72, Cys87, Cys91, Cys94, and Ser300. Positions 73-289 (WAKKHATFMI…AEIGRAKGFL (217 aa)) constitute a Radical SAM core domain.

This sequence belongs to the radical SAM superfamily. Lipoyl synthase family. [4Fe-4S] cluster serves as cofactor.

It is found in the cytoplasm. It carries out the reaction [[Fe-S] cluster scaffold protein carrying a second [4Fe-4S](2+) cluster] + N(6)-octanoyl-L-lysyl-[protein] + 2 oxidized [2Fe-2S]-[ferredoxin] + 2 S-adenosyl-L-methionine + 4 H(+) = [[Fe-S] cluster scaffold protein] + N(6)-[(R)-dihydrolipoyl]-L-lysyl-[protein] + 4 Fe(3+) + 2 hydrogen sulfide + 2 5'-deoxyadenosine + 2 L-methionine + 2 reduced [2Fe-2S]-[ferredoxin]. It participates in protein modification; protein lipoylation via endogenous pathway; protein N(6)-(lipoyl)lysine from octanoyl-[acyl-carrier-protein]: step 2/2. In terms of biological role, catalyzes the radical-mediated insertion of two sulfur atoms into the C-6 and C-8 positions of the octanoyl moiety bound to the lipoyl domains of lipoate-dependent enzymes, thereby converting the octanoylated domains into lipoylated derivatives. The protein is Lipoyl synthase of Methylocella silvestris (strain DSM 15510 / CIP 108128 / LMG 27833 / NCIMB 13906 / BL2).